Consider the following 753-residue polypeptide: MAP/microtubule affinity-regulating kinase 3 (753 aa).

Residues 1-36 (MSTRTPLPTVNERDTENHTSHGDGRQEVTSRTSRSG) are disordered. Basic and acidic residues predominate over residues 11–28 (NERDTENHTSHGDGRQEV). Serine 42 is subject to Phosphoserine. A Protein kinase domain is found at 56–307 (YRLLKTIGKG…LEQIMKDRWI (252 aa)). ATP contacts are provided by residues 62–70 (IGKGNFAKV) and lysine 85. The active-site Proton acceptor is the aspartate 178. Position 211 is a phosphothreonine; by LKB1 (threonine 211). Residues 326–365 (ISDQKRIDIMVGMGYSQEEIQESLSKMKYDEITATYLLLG) form the UBA domain. Phosphoserine is present on residues serine 368, serine 374, serine 376, serine 380, serine 383, leucine 384, serine 400, arginine 407, serine 419, and serine 469. The tract at residues 370–600 (ELDASDSSSS…TPLSQTRSRG (231 aa)) is disordered. Residues 374–385 (SDSSSSSNLSLA) are compositionally biased toward low complexity. The segment covering 391–400 (SDLNNSTGQS) has biased composition (polar residues). Polar residues-rich tracts occupy residues 490–513 (STVP…CSER) and 521–548 (VIQN…SSAA). Phosphoserine is present on residues serine 540 and serine 543. Threonine 549 is modified (phosphothreonine). Phosphothreonine; by PKC/PRKCZ is present on threonine 564. 4 positions are modified to phosphoserine: serine 583, serine 598, serine 601, and serine 643. Residues 584–600 (PSLSHEATPLSQTRSRG) show a composition bias toward polar residues. The tract at residues 632–655 (NGRYEGSSRNVSAEQKDENKEAKP) is disordered. The span at 645-655 (EQKDENKEAKP) shows a compositional bias: basic and acidic residues. Positions 704-753 (DGHAENLVQWEMEVCKLPRLSLNGVRFKRISGTSIAFKNIASKIANELKL) constitute a KA1 domain.

This sequence belongs to the protein kinase superfamily. CAMK Ser/Thr protein kinase family. SNF1 subfamily. Interacts with MAPT/TAU. Interacts with DLG5 (via coiled-coil domain). Interacts with STK3/MST2 and STK4/MST1 in the presence of DLG5. Interacts with YWHAB, YWHAG, YWHAQ and YWHAZ. Interacts with PKP2 (via N-terminus). Interacts with CDC25C. Interacts with KSR1. Phosphorylated at Thr-211 by STK11/LKB1 in complex with STE20-related adapter-alpha (STRADA) pseudo kinase and CAB39. Phosphorylation at Thr-564 by PRKCZ/aPKC inhibits the kinase activity. In terms of tissue distribution, ubiquitous.

The protein localises to the cell membrane. It localises to the cell projection. The protein resides in the dendrite. Its subcellular location is the cytoplasm. The enzyme catalyses L-seryl-[protein] + ATP = O-phospho-L-seryl-[protein] + ADP + H(+). It carries out the reaction L-threonyl-[protein] + ATP = O-phospho-L-threonyl-[protein] + ADP + H(+). With respect to regulation, activated by phosphorylation on Thr-211. Inhibited by phosphorylation on Thr-564. In terms of biological role, serine/threonine-protein kinase. Involved in the specific phosphorylation of microtubule-associated proteins for MAP2 and MAP4. Phosphorylates the microtubule-associated protein MAPT/TAU. Phosphorylates CDC25C on 'Ser-216'. Regulates localization and activity of some histone deacetylases by mediating phosphorylation of HDAC7, promoting subsequent interaction between HDAC7 and 14-3-3 and export from the nucleus. Regulates localization and activity of MITF by mediating its phosphorylation, promoting subsequent interaction between MITF and 14-3-3 and retention in the cytosol. Negatively regulates the Hippo signaling pathway and antagonizes the phosphorylation of LATS1. Cooperates with DLG5 to inhibit the kinase activity of STK3/MST2 toward LATS1. Phosphorylates PKP2 and KSR1. The sequence is that of MAP/microtubule affinity-regulating kinase 3 (MARK3) from Homo sapiens (Human).